Reading from the N-terminus, the 282-residue chain is Elongation factor Ts (282 aa).

Residues 79 to 82 (TDFV) form an involved in Mg(2+) ion dislocation from EF-Tu region.

This sequence belongs to the EF-Ts family.

The protein localises to the cytoplasm. Functionally, associates with the EF-Tu.GDP complex and induces the exchange of GDP to GTP. It remains bound to the aminoacyl-tRNA.EF-Tu.GTP complex up to the GTP hydrolysis stage on the ribosome. This Shewanella loihica (strain ATCC BAA-1088 / PV-4) protein is Elongation factor Ts.